Reading from the N-terminus, the 90-residue chain is Probable Fe(2+)-trafficking protein (90 aa).

This sequence belongs to the Fe(2+)-trafficking protein family. In terms of assembly, monomer.

Its function is as follows. Could be a mediator in iron transactions between iron acquisition and iron-requiring processes, such as synthesis and/or repair of Fe-S clusters in biosynthetic enzymes. The chain is Probable Fe(2+)-trafficking protein from Proteus mirabilis (strain HI4320).